The primary structure comprises 148 residues: SsrA-binding protein (148 aa).

The protein belongs to the SmpB family.

The protein localises to the cytoplasm. In terms of biological role, required for rescue of stalled ribosomes mediated by trans-translation. Binds to transfer-messenger RNA (tmRNA), required for stable association of tmRNA with ribosomes. tmRNA and SmpB together mimic tRNA shape, replacing the anticodon stem-loop with SmpB. tmRNA is encoded by the ssrA gene; the 2 termini fold to resemble tRNA(Ala) and it encodes a 'tag peptide', a short internal open reading frame. During trans-translation Ala-aminoacylated tmRNA acts like a tRNA, entering the A-site of stalled ribosomes, displacing the stalled mRNA. The ribosome then switches to translate the ORF on the tmRNA; the nascent peptide is terminated with the 'tag peptide' encoded by the tmRNA and targeted for degradation. The ribosome is freed to recommence translation, which seems to be the essential function of trans-translation. This is SsrA-binding protein from Ehrlichia canis (strain Jake).